The sequence spans 227 residues: Venom allergen 5.01 (227 aa).

The first 23 residues, 1–23 (MEIGGLVYLILIITIINLSFGET), serve as a signal peptide directing secretion. Disulfide bonds link Cys27–Cys39, Cys31–Cys124, Cys49–Cys117, and Cys193–Cys210. Positions 68 to 212 (LKRHNDFRQN…WYTHYLVCNY (145 aa)) constitute an SCP domain.

Belongs to the CRISP family. Venom allergen 5-like subfamily. As to expression, expressed by the venom gland.

It localises to the secreted. This is Venom allergen 5.01 from Dolichovespula maculata (Bald-faced hornet).